A 122-amino-acid chain; its full sequence is Large ribosomal subunit protein uL14 (122 aa).

Belongs to the universal ribosomal protein uL14 family. As to quaternary structure, part of the 50S ribosomal subunit. Forms a cluster with proteins L3 and L19. In the 70S ribosome, L14 and L19 interact and together make contacts with the 16S rRNA in bridges B5 and B8.

Its function is as follows. Binds to 23S rRNA. Forms part of two intersubunit bridges in the 70S ribosome. The polypeptide is Large ribosomal subunit protein uL14 (Micrococcus luteus (Micrococcus lysodeikticus)).